The primary structure comprises 391 residues: MNVLPAASQPLNQSVTLCVDAPMRLDSGLELGPLTVAYQTIGRLNAERTNAILICHALTGDQHVIGPHPVTGRPGWWETLVGPGKTIDTDRYFIICSNVLGGCLGTTGPKEINPATGKPWGLGFPVITIGDMVRAQALLLDHLGIERLFCAIGGSMGAMQVLQWAVSYPERVRAVVPIAGSWRHSAQNIAFHEVGRQAIMADPDWNGGDYLNQGTVPRRGLAVARMTAHITYLSEPALQSKFGRKLQDRASITYGFDADFQVESYLRHQGANFVKRFDANSYLYITRAMDYFDLAAEHDGVLARAFQGTKVRFCVVSFTSDWLFPTAESRAVVRAMNAAAADVSFVEVTTDKGHDAFLLDEPEFHDTLQGFLDGAADMFGLPRGLFSGIRP.

Residues 50 to 360 (NAILICHALT…DKGHDAFLLD (311 aa)) form the AB hydrolase-1 domain. Residue S155 is the Nucleophile of the active site. Residue R225 coordinates substrate. Active-site residues include D321 and H354. D355 lines the substrate pocket.

It belongs to the AB hydrolase superfamily. MetX family. As to quaternary structure, homodimer.

The protein resides in the cytoplasm. The enzyme catalyses L-homoserine + acetyl-CoA = O-acetyl-L-homoserine + CoA. The protein operates within amino-acid biosynthesis; L-methionine biosynthesis via de novo pathway; O-acetyl-L-homoserine from L-homoserine: step 1/1. Its function is as follows. Transfers an acetyl group from acetyl-CoA to L-homoserine, forming acetyl-L-homoserine. The protein is Homoserine O-acetyltransferase of Rhodospirillum rubrum (strain ATCC 11170 / ATH 1.1.1 / DSM 467 / LMG 4362 / NCIMB 8255 / S1).